The sequence spans 283 residues: Octanoyl-[GcvH]:protein N-octanoyltransferase (283 aa).

The region spanning 42-248 (GQSDAVVRTW…TLQSFGGELY (207 aa)) is the BPL/LPL catalytic domain. The Acyl-thioester intermediate role is filled by Cys-147.

It belongs to the octanoyltransferase LipL family.

The catalysed reaction is N(6)-octanoyl-L-lysyl-[glycine-cleavage complex H protein] + L-lysyl-[lipoyl-carrier protein] = N(6)-octanoyl-L-lysyl-[lipoyl-carrier protein] + L-lysyl-[glycine-cleavage complex H protein]. It participates in protein modification; protein lipoylation via endogenous pathway; protein N(6)-(lipoyl)lysine from octanoyl-[acyl-carrier-protein]. Catalyzes the amidotransfer (transamidation) of the octanoyl moiety from octanoyl-GcvH to the lipoyl domain of the E2 subunit of lipoate-dependent enzymes. In Geobacillus kaustophilus (strain HTA426), this protein is Octanoyl-[GcvH]:protein N-octanoyltransferase.